The primary structure comprises 421 residues: UDP-N-acetylglucosamine 1-carboxyvinyltransferase (421 aa).

Phosphoenolpyruvate is bound at residue K22–N23. Residue R94 coordinates UDP-N-acetyl-alpha-D-glucosamine. Residue C118 is the Proton donor of the active site. C118 carries the post-translational modification 2-(S-cysteinyl)pyruvic acid O-phosphothioketal. UDP-N-acetyl-alpha-D-glucosamine-binding positions include K163–V166, D308, and I330.

Belongs to the EPSP synthase family. MurA subfamily.

It is found in the cytoplasm. The catalysed reaction is phosphoenolpyruvate + UDP-N-acetyl-alpha-D-glucosamine = UDP-N-acetyl-3-O-(1-carboxyvinyl)-alpha-D-glucosamine + phosphate. It functions in the pathway cell wall biogenesis; peptidoglycan biosynthesis. In terms of biological role, cell wall formation. Adds enolpyruvyl to UDP-N-acetylglucosamine. The chain is UDP-N-acetylglucosamine 1-carboxyvinyltransferase from Orientia tsutsugamushi (strain Ikeda) (Rickettsia tsutsugamushi).